The chain runs to 898 residues: Coatomer subunit gamma (898 aa).

HEAT repeat units follow at residues 62 to 99, 170 to 207, 280 to 317, 319 to 352, 353 to 389, and 392 to 427; these read TEAT…ISQD, EIVK…HDRL, KEIN…TNPT, VIPC…GNES, NVER…KFPK, and KHLI…NIPE. A disordered region spans residues 592 to 631; sequence GKSPFSTGASKKGDSVTGTPKSNNASNNNNNNEESSGPES. Residues 613-626 are compositionally biased toward low complexity; the sequence is SNNASNNNNNNEES.

This sequence belongs to the COPG family. In terms of assembly, oligomeric complex that consists of at least the alpha, beta, beta', gamma, delta, epsilon and zeta subunits.

It is found in the cytoplasm. Its subcellular location is the golgi apparatus membrane. The protein resides in the cytoplasmic vesicle. The protein localises to the COPI-coated vesicle membrane. Functionally, the coatomer is a cytosolic protein complex that binds to dilysine motifs and reversibly associates with Golgi non-clathrin-coated vesicles, which further mediate biosynthetic protein transport from the ER, via the Golgi up to the trans Golgi network. Coatomer complex is required for budding from Golgi membranes, and is essential for the retrograde Golgi-to-ER transport of dilysine-tagged proteins. This is Coatomer subunit gamma (copG) from Dictyostelium discoideum (Social amoeba).